Reading from the N-terminus, the 137-residue chain is Large ribosomal subunit protein uL16 (137 aa).

It belongs to the universal ribosomal protein uL16 family. Part of the 50S ribosomal subunit.

Its function is as follows. Binds 23S rRNA and is also seen to make contacts with the A and possibly P site tRNAs. This Lactococcus lactis subsp. lactis (strain IL1403) (Streptococcus lactis) protein is Large ribosomal subunit protein uL16.